Reading from the N-terminus, the 69-residue chain is NSVHPCCDPVTCKPKRGKHCASGPCCENCYIVGVGTVCNPARGDWNDDNCTGVSSDCPPNPWNGKPSDN.

The region spanning 1 to 65 (NSVHPCCDPV…DCPPNPWNGK (65 aa)) is the Disintegrin domain. Cystine bridges form between cysteine 6–cysteine 29, cysteine 20–cysteine 26, cysteine 25–cysteine 50, and cysteine 38–cysteine 57. Positions 42–44 (RGD) match the Cell attachment site motif.

The protein belongs to the venom metalloproteinase (M12B) family. P-II subfamily. P-IIe sub-subfamily. As to quaternary structure, heterodimer with subunit alpha; disulfide-linked. As to expression, expressed by the venom gland.

The protein localises to the secreted. Potently inhibits adhesion of alpha-4/beta-1 (ITGA4/ITGB1) and alpha-9/beta-1 (ITGA9/ITGB1) integrins to VCAM1, and adhesion of alpha-5/beta-1 (ITGA5/ITGB1) integrin to fibronectin. Has a much less effect on alpha-IIb/beta-3 (ITGA2B/ITGB3) integrin. Also potently inhibits neutrophil migration across TNF-alpha-activated human umbilical endothelial cells. This chain is Disintegrin EC6 subunit beta, found in Echis carinatus sochureki (Saw-scaled viper).